We begin with the raw amino-acid sequence, 918 residues long: Calcium-transporting ATPase type 2C member 1 (918 aa).

Residues 1–78 lie on the Cytoplasmic side of the membrane; that stretch reads MKVARFQKIP…EPLWKKYISQ (78 aa). A helical membrane pass occupies residues 79–95; that stretch reads FKNPLIMLLLASAVISI. Topologically, residues 96-99 are extracellular; the sequence is LMRQ. The chain crosses the membrane as a helical span at residues 100–121; the sequence is FDDAVSITVAIVIVVTVAFVQE. Over 122 to 262 the chain is Cytoplasmic; it reads YRSEKSLEEL…PKTPLQKSMD (141 aa). A helical membrane pass occupies residues 263-282; it reads LLGKQLSFYSFGIIGIIMLV. The Extracellular segment spans residues 283–294; that stretch reads GWLLGKDILEMF. The chain crosses the membrane as a helical span at residues 295-316; sequence TISVSLAVAAIPEGLPIVVTVT. Residues 317–699 lie on the Cytoplasmic side of the membrane; the sequence is LALGVMRMVK…EGKGIYNNIK (383 aa). Aspartate 349 (4-aspartylphosphate intermediate) is an active-site residue. 2 residues coordinate Mg(2+): aspartate 643 and aspartate 647. A helical membrane pass occupies residues 700–722; the sequence is NFVRFQLSTSIAALTLISLATLM. The Extracellular segment spans residues 723-727; sequence NFPNP. A helical membrane pass occupies residues 728–751; it reads LNAMQILWINIIMDGPPAQSLGVE. Residues 752–775 lie on the Cytoplasmic side of the membrane; that stretch reads PVDKDVIRKPPRNWKDSILTKNLI. A helical transmembrane segment spans residues 776–794; the sequence is LKILVSSIIIVCGTLFVFW. Residues 795–801 lie on the Extracellular side of the membrane; sequence RELRDNV. Residues 802–827 form a helical membrane-spanning segment; that stretch reads ITPRDTTMTFTCFVFFDMFNALSSRS. The Cytoplasmic segment spans residues 828 to 842; the sequence is QTKSVFEIGLCSNKM. Residues 843-862 form a helical membrane-spanning segment; that stretch reads FCYAVLGSIMGQLLVIYFPP. At 863 to 875 the chain is on the extracellular side; the sequence is LQKVFQTESLSIL. Residues 876–892 traverse the membrane as a helical segment; that stretch reads DLLFLLGLTSSVCIVSE. Residues 893–918 lie on the Cytoplasmic side of the membrane; the sequence is IIKKVERSREKVQKNAGSASSSFLEV.

The protein belongs to the cation transport ATPase (P-type) (TC 3.A.3) family. Type IIA subfamily. In terms of assembly, monomer. Homodimer. In terms of tissue distribution, expressed in hippocampal neurons in the CA3 region of the Amon's horn (at protein level). Expressed in brain, heart, lung, stomach, liver, colon and mammary gland.

It localises to the golgi apparatus. The protein localises to the trans-Golgi network membrane. The protein resides in the golgi stack membrane. It carries out the reaction Ca(2+)(in) + ATP + H2O = Ca(2+)(out) + ADP + phosphate + H(+). The catalysed reaction is Mn(2+)(in) + ATP + H2O = Mn(2+)(out) + ADP + phosphate + H(+). In terms of biological role, ATP-driven pump that supplies the Golgi apparatus with Ca(2+) and Mn(2+) ions, both essential cofactors for processing and trafficking of newly synthesized proteins in the secretory pathway. Within a catalytic cycle, acquires Ca(2+) or Mn(2+) ions on the cytoplasmic side of the membrane and delivers them to the lumenal side. The transfer of ions across the membrane is coupled to ATP hydrolysis and is associated with a transient phosphorylation that shifts the pump conformation from inward-facing to outward-facing state. Plays a primary role in the maintenance of Ca(2+) homeostasis in the trans-Golgi compartment with a functional impact on Golgi and post-Golgi protein sorting as well as a structural impact on cisternae morphology. Responsible for loading the Golgi stores with Ca(2+) ions in keratinocytes, contributing to keratinocyte differentiation and epidermis integrity. Participates in Ca(2+) and Mn(2+) ions uptake into the Golgi store of hippocampal neurons and regulates protein trafficking required for neural polarity. May also play a role in the maintenance of Ca(2+) and Mn(2+) homeostasis and signaling in the cytosol while preventing cytotoxicity. This Mus musculus (Mouse) protein is Calcium-transporting ATPase type 2C member 1.